Consider the following 884-residue polypeptide: E3 ubiquitin-protein ligase BRE1-like 1 (884 aa).

The tract at residues 1-37 (MGSTGEPDRKRRLSSSVAPGGGAPVSPAKRLAVAPTS) is disordered. Residues 49–86 (YKNQKLSEQLEAHKFEYRALENKFAGLKEKQRTHNETL) are a coiled coil. The tract at residues 107 to 127 (KSGSPNSSPGSGHNNVQKDGT) is disordered. Residues 108–121 (SGSPNSSPGSGHNN) are compositionally biased toward low complexity. 4 coiled-coil regions span residues 216-541 (LNNV…ELKL), 580-663 (SKLE…LQQI), 696-762 (RNLQ…QSLD), and 789-827 (KKRI…KEYR). Residues 832–871 (CGICHDRQKEVVITKCYHLFCNQCIQKSLGNRQRRCPSCS) form an RING-type zinc finger.

Belongs to the BRE1 family. Interacts with SKIPA. Interacts with HUB2.

It is found in the nucleus. It catalyses the reaction S-ubiquitinyl-[E2 ubiquitin-conjugating enzyme]-L-cysteine + [acceptor protein]-L-lysine = [E2 ubiquitin-conjugating enzyme]-L-cysteine + N(6)-ubiquitinyl-[acceptor protein]-L-lysine.. It functions in the pathway protein modification; protein ubiquitination. Its function is as follows. E3 ubiquitin-protein ligase that monoubiquitinates H2B to form H2BK143ub1. H2BK143ub1 gives a specific tag for epigenetic transcriptional activation and is a prerequisite for H3 Lys-4 methylation (H3K4me). It thereby plays a central role in histone code and gene regulation. H2B monoubiquitination (H2BK143ub1), mediated by HUB1, modulates transcriptional regulation of anther development, likely by promoting histone H3K4 dimethylation (H3K4me2) in the chromatin of the key tapetum degradation-related genes C4, CP1 and UDT1. The protein is E3 ubiquitin-protein ligase BRE1-like 1 of Oryza sativa subsp. japonica (Rice).